The sequence spans 85 residues: UPF0386 protein HNE_3437 (85 aa).

The protein belongs to the UPF0386 family.

This is UPF0386 protein HNE_3437 from Hyphomonas neptunium (strain ATCC 15444).